We begin with the raw amino-acid sequence, 100 residues long: MSAAKQCFRNLWRASNSVFEGDPMILAAARDKIRTGFHNHRCCSPEEAKKEIQNGNAVAEILRRNVVQAEKQSNDTYSLKIRKTTEINTNRQFTEKKFPR.

Belongs to the complex I LYR family. MZM1 subfamily. As to quaternary structure, interacts with RIP1.

Its subcellular location is the mitochondrion matrix. Assembly factor required for Rieske Fe-S protein RIP1 incorporation into the cytochrome b-c1 (CIII) complex. Functions as a chaperone, binding to this subunit within the mitochondrial matrix and stabilizing it prior to its translocation and insertion into the late CIII dimeric intermediate within the mitochondrial inner membrane. Modulates the mitochondrial matrix zinc pool. This Schizosaccharomyces pombe (strain 972 / ATCC 24843) (Fission yeast) protein is Mitochondrial zinc maintenance protein 1, mitochondrial (new18).